Reading from the N-terminus, the 463-residue chain is Cysteine--tRNA ligase (463 aa).

Residue Cys-28 participates in Zn(2+) binding. The 'HIGH' region signature appears at 30 to 40; sequence VTIYDLCHIGH. Zn(2+) is bound by residues Cys-209, His-234, and Glu-238. Residues 266–270 carry the 'KMSKS' region motif; the sequence is KMSKS. Lys-269 serves as a coordination point for ATP.

It belongs to the class-I aminoacyl-tRNA synthetase family. In terms of assembly, monomer. Zn(2+) is required as a cofactor.

It localises to the cytoplasm. The enzyme catalyses tRNA(Cys) + L-cysteine + ATP = L-cysteinyl-tRNA(Cys) + AMP + diphosphate. In Tolumonas auensis (strain DSM 9187 / NBRC 110442 / TA 4), this protein is Cysteine--tRNA ligase.